The sequence spans 270 residues: MTKVVVTGAAGRMGTQIVRLVRATPGLAVSGAVERAGSPAIGKDAGTLAGGEPLGVAVVDDLAKALAGADVVIDFTSHEASVRHAQACAAAGVALVIGSTGFTPDAKAKVAEAARKVPVVLSPNMSVGVNVVFELVRQAARVLGDGYDVEIVEIHHKHKRDAPSGTAVRLGEVAAEALGRAPADALAYTRHGILGERPPWQIGIQTLRGGDVVGEHTVFFCGEGERVEITHRATSREQFARGAARAAAWLPGKPPGVYDMADVLGLRGGK.

NAD(+) is bound by residues 8 to 13 and glutamate 34; that span reads GAAGRM. Arginine 35 serves as a coordination point for NADP(+). NAD(+) is bound by residues 98–100 and 122–125; these read GST and SPNM. The active-site Proton donor/acceptor is histidine 155. Histidine 156 lines the (S)-2,3,4,5-tetrahydrodipicolinate pocket. Lysine 159 acts as the Proton donor in catalysis. A (S)-2,3,4,5-tetrahydrodipicolinate-binding site is contributed by 165–166; sequence GT.

This sequence belongs to the DapB family.

Its subcellular location is the cytoplasm. It catalyses the reaction (S)-2,3,4,5-tetrahydrodipicolinate + NAD(+) + H2O = (2S,4S)-4-hydroxy-2,3,4,5-tetrahydrodipicolinate + NADH + H(+). The catalysed reaction is (S)-2,3,4,5-tetrahydrodipicolinate + NADP(+) + H2O = (2S,4S)-4-hydroxy-2,3,4,5-tetrahydrodipicolinate + NADPH + H(+). Its pathway is amino-acid biosynthesis; L-lysine biosynthesis via DAP pathway; (S)-tetrahydrodipicolinate from L-aspartate: step 4/4. Catalyzes the conversion of 4-hydroxy-tetrahydrodipicolinate (HTPA) to tetrahydrodipicolinate. The chain is 4-hydroxy-tetrahydrodipicolinate reductase from Anaeromyxobacter dehalogenans (strain 2CP-1 / ATCC BAA-258).